The primary structure comprises 376 residues: Putative clathrin assembly protein At1g25240 (376 aa).

The 132-residue stretch at 25–156 (KTSFRNPDLD…FFLSDQIRRR (132 aa)) folds into the ENTH domain.

It is found in the membrane. Its subcellular location is the clathrin-coated pit. It localises to the golgi apparatus. The protein resides in the cytoplasmic vesicle. The protein localises to the clathrin-coated vesicle. In Arabidopsis thaliana (Mouse-ear cress), this protein is Putative clathrin assembly protein At1g25240.